Here is a 1136-residue protein sequence, read N- to C-terminus: Probable LRR receptor-like serine/threonine-protein kinase At4g36180 (1136 aa).

Positions 1 to 22 are cleaved as a signal peptide; it reads MAMDISLFFIFLVIYAPLVSYA. Over 23 to 751 the chain is Extracellular; it reads DESQAEIDAL…TAEGKKKKRK (729 aa). 8 LRR repeats span residues 93–115, 117–139, 141–162, 163–186, 187–210, 211–233, 235–256, and 259–280; these read MLRKLSLRSNSFNGTIPTSLAYC, RLLSVFLQYNSLSGKLPPAMRNL, SLEVFNVAGNRLSGEIPVGLPS, SLQFLDISSNTFSGQIPSGLANLT, QLQLLNLSYNQLTGEIPASLGNLQ, SLQYLWLDFNLLQGTLPSAISNC, SLVHLSASENEIGGVIPAAYGA, and KLEVLSLSNNNFSGTVPFSLFC. N-linked (GlcNAc...) asparagine glycans are attached at residues asparagine 105 and asparagine 138. N-linked (GlcNAc...) asparagine glycosylation is found at asparagine 184, asparagine 192, and asparagine 232. N-linked (GlcNAc...) asparagine glycosylation is found at asparagine 269 and asparagine 281. 18 LRR repeats span residues 283 to 304, 309 to 330, 333 to 355, 357 to 379, 381 to 403, 405 to 426, 429 to 452, 453 to 479, 480 to 500, 501 to 524, 525 to 546, 549 to 571, 573 to 595, 597 to 620, 621 to 643, 645 to 666, 669 to 691, and 694 to 716; these read SLTIVQLGFNAFSDIVRPETTA, GLQVLDLQENRISGRFPLWLTN, SLKNLDVSGNLFSGEIPPDIGNL, RLEELKLANNSLTGEIPVEIKQC, SLDVLDFEGNSLKGQIPEFLGYM, ALKVLSLGRNSFSGYVPSSMVN, QLERLNLGENNLNGSFPVELMALT, SLSELDLSGNRFSGAVPVSISNLSNLS, FLNLSGNGFSGEIPASVGNLF, KLTALDLSKQNMSGEVPVELSGLP, NVQVIALQGNNFSGVVPEGFSS, SLRYVNLSSNSFSGEIPQTFGFL, LLVSLSLSDNHISGSIPPEIGNC, ALEVLELRSNRLMGHIPADLSRLP, RLKVLDLGQNNLSGEIPPEISQS, SLNSLSLDHNHLSGVIPGSFSG, NLTKMDLSVNNLTGEIPASLALI, and NLVYFNVSSNNLKGEIPASLGSR. Asparagine 365 carries N-linked (GlcNAc...) asparagine glycosylation. Asparagine 441, asparagine 474, asparagine 477, asparagine 482, asparagine 511, asparagine 535, asparagine 554, and asparagine 594 each carry an N-linked (GlcNAc...) asparagine glycan. An N-linked (GlcNAc...) asparagine glycan is attached at asparagine 631. N-linked (GlcNAc...) asparagine glycosylation is found at asparagine 669, asparagine 679, asparagine 699, and asparagine 719. A helical membrane pass occupies residues 752-772; the sequence is MILMIVMAAIGAFLLSLFCCF. Over 773 to 1136 the chain is Cytoplasmic; sequence YVYTLLKWRK…ADPTSQPSPA (364 aa). A disordered region spans residues 786–819; sequence QQSTTGEKKRSPGRTSAGSRVRSSTSRSSTENGE. Residues 799–815 show a composition bias toward low complexity; it reads RTSAGSRVRSSTSRSST. Phosphothreonine occurs at positions 830 and 838. A Protein kinase domain is found at 841 to 1123; the sequence is FDEENVLSRT…LEGCRVGPDV (283 aa). Residues tyrosine 915 and tyrosine 1010 each carry the phosphotyrosine modification.

It belongs to the protein kinase superfamily. Ser/Thr protein kinase family.

The protein localises to the cell membrane. The catalysed reaction is L-seryl-[protein] + ATP = O-phospho-L-seryl-[protein] + ADP + H(+). It catalyses the reaction L-threonyl-[protein] + ATP = O-phospho-L-threonyl-[protein] + ADP + H(+). The protein is Probable LRR receptor-like serine/threonine-protein kinase At4g36180 of Arabidopsis thaliana (Mouse-ear cress).